An 815-amino-acid polypeptide reads, in one-letter code: Minichromosome loss protein 1 (815 aa).

WD repeat units follow at residues 11–50 (AHTDGLTRLAYTRDGKFLLTVGSNQVIRKFQVGSDEEPDS), 53–90 (NHQDPITGIAVAENYFCTCSEDATVCVYPIDSPTEHTL), 93–132 (RTTLPIRDVAYSVDGNWIAIASDETAVKVVSSTDSSQIFS), 135–174 (PAKASNKHVTYSPNGNFLAVSSCNGILYFYDTQTRELIKF), and 228–267 (ENHSGVTDISWSSNGMYIAASFKKGGILIWDTQSHEVVVE). The segment at 306 to 362 (LKEENDPTKPLTSSKSKNRTSKELDDLFGSDDEQSQNVNDLDGNSANEENEFINHDG) is disordered. The segment covering 340–352 (SQNVNDLDGNSAN) has biased composition (polar residues). Residues 517–553 (ENESPVTISLSSSVVLVCTSAGYVRVFSRQGFPISIH) form a WD 6 repeat.

In terms of assembly, interacts with pof3 and pol1.

Its subcellular location is the nucleus. The protein localises to the chromosome. Its function is as follows. Has a role in regulating DNA replication complexes. Acts as a regulator of post DNA replication initiation. Associates with chromatin during G1 and S phases of mitosis. Required for the transcriptional repression of the outer repeats of the centromeric region. Acts as a polymerase alpha replication accessory factor and is important for S-phase DNA damage survival. Plays a role in lagging-strand synthesis and Ozaki fragment processing, in addition to DNA repair. This Schizosaccharomyces pombe (strain 972 / ATCC 24843) (Fission yeast) protein is Minichromosome loss protein 1 (mcl1).